A 329-amino-acid chain; its full sequence is Ribosomal RNA small subunit methyltransferase H (329 aa).

Residues 44 to 46 (GGY), Asp-62, Asp-110, and Gln-117 each bind S-adenosyl-L-methionine. Positions 297 to 329 (APAELAANPRARSARLRSAERTSAPARRLGDAA) are disordered.

The protein belongs to the methyltransferase superfamily. RsmH family.

Its subcellular location is the cytoplasm. The enzyme catalyses cytidine(1402) in 16S rRNA + S-adenosyl-L-methionine = N(4)-methylcytidine(1402) in 16S rRNA + S-adenosyl-L-homocysteine + H(+). Specifically methylates the N4 position of cytidine in position 1402 (C1402) of 16S rRNA. The chain is Ribosomal RNA small subunit methyltransferase H from Rhodospirillum centenum (strain ATCC 51521 / SW).